Reading from the N-terminus, the 427-residue chain is Phosphoribosylamine--glycine ligase (427 aa).

Positions 107–312 (KDLCARFNIP…LLALVNAAVD (206 aa)) constitute an ATP-grasp domain. ATP is bound at residue 133-193 (IRQQGAPIVV…EEFLDGEEAS (61 aa)). 2 residues coordinate Mg(2+): Glu-282 and Asn-284.

It belongs to the GARS family. Mg(2+) is required as a cofactor. Requires Mn(2+) as cofactor.

It carries out the reaction 5-phospho-beta-D-ribosylamine + glycine + ATP = N(1)-(5-phospho-beta-D-ribosyl)glycinamide + ADP + phosphate + H(+). Its pathway is purine metabolism; IMP biosynthesis via de novo pathway; N(1)-(5-phospho-D-ribosyl)glycinamide from 5-phospho-alpha-D-ribose 1-diphosphate: step 2/2. The sequence is that of Phosphoribosylamine--glycine ligase from Brucella melitensis biotype 1 (strain ATCC 23456 / CCUG 17765 / NCTC 10094 / 16M).